The following is a 159-amino-acid chain: Ribosomal RNA large subunit methyltransferase H (159 aa).

S-adenosyl-L-methionine contacts are provided by Leu-76 and Gly-108.

This sequence belongs to the RNA methyltransferase RlmH family. Homodimer.

It is found in the cytoplasm. The catalysed reaction is pseudouridine(1915) in 23S rRNA + S-adenosyl-L-methionine = N(3)-methylpseudouridine(1915) in 23S rRNA + S-adenosyl-L-homocysteine + H(+). In terms of biological role, specifically methylates the pseudouridine at position 1915 (m3Psi1915) in 23S rRNA. The sequence is that of Ribosomal RNA large subunit methyltransferase H from Limosilactobacillus fermentum (strain NBRC 3956 / LMG 18251) (Lactobacillus fermentum).